The chain runs to 342 residues: Dihydroorotase (342 aa).

2 residues coordinate Zn(2+): histidine 13 and histidine 15. Substrate-binding positions include 15 to 17 (HLR) and asparagine 41. The Zn(2+) site is built by lysine 98, histidine 135, and histidine 173. At lysine 98 the chain carries N6-carboxylysine. Histidine 135 is a binding site for substrate. Residue leucine 218 participates in substrate binding. Residue aspartate 246 participates in Zn(2+) binding. Aspartate 246 is a catalytic residue. Histidine 250 and alanine 262 together coordinate substrate.

It belongs to the metallo-dependent hydrolases superfamily. DHOase family. Class II DHOase subfamily. Homodimer. Requires Zn(2+) as cofactor.

The enzyme catalyses (S)-dihydroorotate + H2O = N-carbamoyl-L-aspartate + H(+). It functions in the pathway pyrimidine metabolism; UMP biosynthesis via de novo pathway; (S)-dihydroorotate from bicarbonate: step 3/3. Its function is as follows. Catalyzes the reversible cyclization of carbamoyl aspartate to dihydroorotate. In Aliivibrio fischeri (strain MJ11) (Vibrio fischeri), this protein is Dihydroorotase.